Reading from the N-terminus, the 302-residue chain is DDRGK domain-containing protein 1 (302 aa).

Residues 1-5 (MDGGG) are Lumenal-facing. A helical membrane pass occupies residues 6–26 (GMLGAVVCLLLVFAIFPLLLW). At 27–302 (RRRSDAAHRL…DENAAAGTEL (276 aa)) the chain is on the cytoplasmic side. Disordered regions lie at residues 36-151 (LPPQ…EEAR) and 279-302 (DLEP…GTEL). The span at 79–91 (VDDADSDLEEEIQ) shows a compositional bias: acidic residues. The segment covering 103-151 (KRQDREAQRQAEEAARDSRRTKQDRYAEMRRKKDEEREAQERLMEEEAR) has biased composition (basic and acidic residues).

Belongs to the DDRGK1 family.

The protein resides in the endoplasmic reticulum membrane. Substrate adapter for ufmylation, the covalent attachment of the ubiquitin-like modifier UFM1 to substrate proteins. In Oryza sativa subsp. japonica (Rice), this protein is DDRGK domain-containing protein 1.